We begin with the raw amino-acid sequence, 272 residues long: F-actin-capping protein subunit beta (272 aa).

Ser2 is subject to N-acetylserine. At Ser2 the chain carries Phosphoserine. The residue at position 235 (Lys235) is an N6-acetyllysine. Val263 is modified (phosphoserine).

It belongs to the F-actin-capping protein beta subunit family. In terms of assembly, component of the F-actin capping complex, composed of a heterodimer of an alpha and a beta subunit. Subunit of dynactin, a multiprotein complex part of a tripartite complex with dynein and a adapter, such as BICDL1, BICD2 or HOOK3. The dynactin complex is built around ACTR1A/ACTB filament and consists of an actin-related filament composed of a shoulder domain, a pointed end and a barbed end. Its length is defined by its flexible shoulder domain. The soulder is composed of 2 DCTN1 subunits, 4 DCTN2 and 2 DCTN3. The 4 DCNT2 (via N-terminus) bind the ACTR1A filament and act as molecular rulers to determine the length. The pointed end is important for binding dynein-dynactin cargo adapters. Consists of 4 subunits: ACTR10, DCNT4, DCTN5 and DCTN6. The barbed end is composed of a CAPZA1:CAPZB heterodimers, which binds ACTR1A/ACTB filament and dynactin and stabilizes dynactin. Interacts with ARHGAP17. Interaction with RCSD1/CAPZIP. Component of the WASH complex, composed of F-actin-capping protein subunit alpha (CAPZA1, CAPZA2 or CAPZA3), F-actin-capping protein subunit beta (CAPZB), WASH (WASHC1, WASH2P, WASH3P, WASH4P, WASH5P or WASH6P), WASHC2 (WASHC2A or WASHC2C), WASHC3, WASHC4 and WASHC5. Interacts with ACTG1. Directly interacts with CRACD; this interaction decreases binding to actin.

The protein resides in the cytoplasm. It is found in the cytoskeleton. The protein localises to the myofibril. Its subcellular location is the sarcomere. F-actin-capping proteins bind in a Ca(2+)-independent manner to the fast growing ends of actin filaments (barbed end) thereby blocking the exchange of subunits at these ends. Unlike other capping proteins (such as gelsolin and severin), these proteins do not sever actin filaments. Plays a role in the regulation of cell morphology and cytoskeletal organization. Forms, with CAPZB, the barbed end of the fast growing ends of actin filaments in the dynactin complex and stabilizes dynactin structure. The dynactin multiprotein complex activates the molecular motor dynein for ultra-processive transport along microtubules. This is F-actin-capping protein subunit beta from Homo sapiens (Human).